The sequence spans 778 residues: Endonuclease MutS2 (778 aa).

328–335 (GPNTGGKT) provides a ligand contact to ATP. The Smr domain occupies 703–778 (LDLRGKRYEE…GSGCTIANLG (76 aa)).

It belongs to the DNA mismatch repair MutS family. MutS2 subfamily. Homodimer. Binds to stalled ribosomes, contacting rRNA.

Functionally, endonuclease that is involved in the suppression of homologous recombination and thus may have a key role in the control of bacterial genetic diversity. Its function is as follows. Acts as a ribosome collision sensor, splitting the ribosome into its 2 subunits. Detects stalled/collided 70S ribosomes which it binds and splits by an ATP-hydrolysis driven conformational change. Acts upstream of the ribosome quality control system (RQC), a ribosome-associated complex that mediates the extraction of incompletely synthesized nascent chains from stalled ribosomes and their subsequent degradation. Probably generates substrates for RQC. In Streptococcus equi subsp. equi (strain 4047), this protein is Endonuclease MutS2.